A 469-amino-acid chain; its full sequence is Glutamate--tRNA ligase (469 aa).

The 'HIGH' region motif lies at 11 to 21 (PSPTGFIHLGN). The short motif at 243–247 (KMSKR) is the 'KMSKS' region element. K246 serves as a coordination point for ATP.

This sequence belongs to the class-I aminoacyl-tRNA synthetase family. Glutamate--tRNA ligase type 1 subfamily. As to quaternary structure, monomer.

The protein resides in the cytoplasm. The catalysed reaction is tRNA(Glu) + L-glutamate + ATP = L-glutamyl-tRNA(Glu) + AMP + diphosphate. In terms of biological role, catalyzes the attachment of glutamate to tRNA(Glu) in a two-step reaction: glutamate is first activated by ATP to form Glu-AMP and then transferred to the acceptor end of tRNA(Glu). The sequence is that of Glutamate--tRNA ligase from Burkholderia ambifaria (strain MC40-6).